Reading from the N-terminus, the 344-residue chain is MSTNLSNAEILNNLLEGRDLDELTSRALMQRWLNDEISDVETGAFLSALRAKSSTGVELSSMAKELLNVCELPVARPNLYLVDTCGTGGDGANTFNISTAVAFVAASCGVKIAKHGNKSASGKVGSADVLLNLGLNLNCSLEKVINAVSEIGITFLFAPVWHKSLIKLAPLRKTLGIRTVFNQLGPLVNPLRPNAQVLGVASEDLLQPMGSALLNLGMNRAIVVHGSGGLDEASLQGKNKLVFIENGELRFSEINISDFNHENIANENLVVSDLDSNEEILKSVLNGSGQKSHMDVVALNVSLVLWAAGIEDNLNEGFNKALFSINKGDPWKKFLLLKNYLSAN.

Residues Gly86, 89–90, Thr94, 96–99, 114–122, and Ser126 each bind 5-phospho-alpha-D-ribose 1-diphosphate; these read GD, NIST, and KHGNKSASG. Gly86 is a binding site for anthranilate. Position 98 (Ser98) interacts with Mg(2+). Asn117 serves as a coordination point for anthranilate. Anthranilate is bound at residue Arg172. Residues Asp231 and Glu232 each coordinate Mg(2+).

It belongs to the anthranilate phosphoribosyltransferase family. In terms of assembly, homodimer. It depends on Mg(2+) as a cofactor.

The catalysed reaction is N-(5-phospho-beta-D-ribosyl)anthranilate + diphosphate = 5-phospho-alpha-D-ribose 1-diphosphate + anthranilate. The protein operates within amino-acid biosynthesis; L-tryptophan biosynthesis; L-tryptophan from chorismate: step 2/5. Functionally, catalyzes the transfer of the phosphoribosyl group of 5-phosphorylribose-1-pyrophosphate (PRPP) to anthranilate to yield N-(5'-phosphoribosyl)-anthranilate (PRA). The chain is Anthranilate phosphoribosyltransferase from Prochlorococcus marinus (strain MIT 9301).